The primary structure comprises 160 residues: Protein-export protein SecB (160 aa).

The protein belongs to the SecB family. In terms of assembly, homotetramer, a dimer of dimers. One homotetramer interacts with 1 SecA dimer.

The protein resides in the cytoplasm. One of the proteins required for the normal export of preproteins out of the cell cytoplasm. It is a molecular chaperone that binds to a subset of precursor proteins, maintaining them in a translocation-competent state. It also specifically binds to its receptor SecA. The protein is Protein-export protein SecB of Nitrosomonas eutropha (strain DSM 101675 / C91 / Nm57).